The chain runs to 218 residues: Dehydration-responsive element-binding protein 1B (218 aa).

The tract at residues 1 to 26 (MEVEEAAYRTVWSEPPKRPAGRTKFR) is disordered. Residues 32–95 (VYRGVRRRGG…RGRAACLNFA (64 aa)) constitute a DNA-binding region (AP2/ERF). Positions 131–151 (SAAPSSPAETFANDGDEEEDN) are disordered.

The protein belongs to the AP2/ERF transcription factor family. ERF subfamily.

It is found in the nucleus. In terms of biological role, transcriptional activator that binds specifically to the DNA sequence 5'-[AG]CCGAC-3'. Binding to the C-repeat/DRE element mediates high salinity- and dehydration-inducible transcription. Confers resistance to high salt, cold and drought stress. In Oryza sativa subsp. japonica (Rice), this protein is Dehydration-responsive element-binding protein 1B (DREB1B).